Here is a 1070-residue protein sequence, read N- to C-terminus: Inactive tyrosine-protein kinase 7 (1070 aa).

An N-terminal signal peptide occupies residues 1 to 30; sequence MGAARGSPARPRRLPLLSVLLLPLLGGTQT. 7 Ig-like C2-type domains span residues 31-120, 128-218, 225-317, 309-407, 412-497, 503-586, and 578-680; these read AIVF…ASFN, PVVL…FTLS, ARVV…EATL, PPII…VNIT, PSWL…ARVQ, KFTP…HVQL, and GQIR…APLY. Residues 31 to 704 are Extracellular-facing; that stretch reads AIVFIKQPSS…SPPPYKMIQT (674 aa). A disulfide bridge links C53 with C101. N-linked (GlcNAc...) asparagine glycosylation is found at N116, N175, N184, N214, N268, and N283. A disulfide bridge links C150 with C200. 2 disulfides stabilise this stretch: C246/C301 and C343/C391. N-linked (GlcNAc...) asparagine glycans are attached at residues N405, N463, N567, and N646. 3 cysteine pairs are disulfide-bonded: C433/C481, C524/C570, and C613/C664. Residues 705–725 traverse the membrane as a helical segment; that stretch reads IGLSVGAAVAYIIAVLGLMFY. At 726-1070 the chain is on the cytoplasmic side; that stretch reads CKKRCKAKRL…LGDSTVDSKP (345 aa). Disordered stretches follow at residues 736–759 and 773–793; these read QKQP…NGQP and GSGP…HFPR. The interval 794–1070 is interaction with CTNNB1; sequence SSLQPITTLG…LGDSTVDSKP (277 aa). The Protein kinase; inactive domain maps to 796 to 1066; sequence LQPITTLGKS…IASALGDSTV (271 aa). A Phosphoserine modification is found at S1064.

It belongs to the protein kinase superfamily. Tyr protein kinase family. Insulin receptor subfamily. As to quaternary structure, interacts with CTNNB1. In terms of processing, MMP14 cleaves PTK7 between Pro-621 and Leu-622 generating an N-terminal soluble (70 kDa) fragment and a membrane C-terminal (50 kDa) fragment. Proteolysis by MMP14 regulates PTK7 function in non-canonical Wnt signaling pathway. In terms of tissue distribution, highly expressed in lung, liver, pancreas, kidney, placenta and melanocytes. Weakly expressed in thyroid gland, ovary, brain, heart and skeletal muscle. Also expressed in erythroleukemia cells. But not expressed in colon.

It localises to the membrane. The protein resides in the cell junction. Its function is as follows. Inactive tyrosine kinase involved in Wnt signaling pathway. Component of both the non-canonical (also known as the Wnt/planar cell polarity signaling) and the canonical Wnt signaling pathway. Functions in cell adhesion, cell migration, cell polarity, proliferation, actin cytoskeleton reorganization and apoptosis. Has a role in embryogenesis, epithelial tissue organization and angiogenesis. In Homo sapiens (Human), this protein is Inactive tyrosine-protein kinase 7 (PTK7).